A 244-amino-acid chain; its full sequence is 3-deoxy-manno-octulosonate cytidylyltransferase (244 aa).

Belongs to the KdsB family.

It is found in the cytoplasm. The catalysed reaction is 3-deoxy-alpha-D-manno-oct-2-ulosonate + CTP = CMP-3-deoxy-beta-D-manno-octulosonate + diphosphate. The protein operates within nucleotide-sugar biosynthesis; CMP-3-deoxy-D-manno-octulosonate biosynthesis; CMP-3-deoxy-D-manno-octulosonate from 3-deoxy-D-manno-octulosonate and CTP: step 1/1. It functions in the pathway bacterial outer membrane biogenesis; lipopolysaccharide biosynthesis. Functionally, activates KDO (a required 8-carbon sugar) for incorporation into bacterial lipopolysaccharide in Gram-negative bacteria. The chain is 3-deoxy-manno-octulosonate cytidylyltransferase from Rickettsia bellii (strain OSU 85-389).